Here is a 463-residue protein sequence, read N- to C-terminus: L-seryl-tRNA(Sec) selenium transferase (463 aa).

At Lys295 the chain carries N6-(pyridoxal phosphate)lysine.

Belongs to the SelA family. In terms of assembly, homodecamer; pentamer of dimers. Binds only one seryl-tRNA(Sec) per dimer. Pyridoxal 5'-phosphate serves as cofactor.

It is found in the cytoplasm. The catalysed reaction is L-seryl-tRNA(Sec) + selenophosphate + H(+) = L-selenocysteinyl-tRNA(Sec) + phosphate. Its pathway is aminoacyl-tRNA biosynthesis; selenocysteinyl-tRNA(Sec) biosynthesis; selenocysteinyl-tRNA(Sec) from L-seryl-tRNA(Sec) (bacterial route): step 1/1. In terms of biological role, converts seryl-tRNA(Sec) to selenocysteinyl-tRNA(Sec) required for selenoprotein biosynthesis. The polypeptide is L-seryl-tRNA(Sec) selenium transferase (Escherichia coli O17:K52:H18 (strain UMN026 / ExPEC)).